The primary structure comprises 156 residues: Small ribosomal subunit protein uS7 (156 aa).

The protein belongs to the universal ribosomal protein uS7 family. As to quaternary structure, part of the 30S ribosomal subunit. Contacts proteins S9 and S11.

Functionally, one of the primary rRNA binding proteins, it binds directly to 16S rRNA where it nucleates assembly of the head domain of the 30S subunit. Is located at the subunit interface close to the decoding center, probably blocks exit of the E-site tRNA. This Bacillus cereus (strain G9842) protein is Small ribosomal subunit protein uS7.